A 365-amino-acid polypeptide reads, in one-letter code: Holliday junction branch migration complex subunit RuvB (365 aa).

Residues 1-191 (MNFDPIDDFD…FGFTAHMDFY (191 aa)) are large ATPase domain (RuvB-L). ATP-binding positions include Leu30, Arg31, Gly72, Lys75, Thr76, Ser77, 138-140 (EDF), Arg181, Tyr191, and Arg228. Thr76 is a Mg(2+) binding site. The segment at 192 to 262 (EPEELQQILM…VAQAALAVYD (71 aa)) is small ATPAse domain (RuvB-S). Residues 265-365 (QLGLDRLDRS…QATLFDPNGE (101 aa)) form a head domain (RuvB-H) region. Arg320 and Arg325 together coordinate DNA.

This sequence belongs to the RuvB family. As to quaternary structure, homohexamer. Forms an RuvA(8)-RuvB(12)-Holliday junction (HJ) complex. HJ DNA is sandwiched between 2 RuvA tetramers; dsDNA enters through RuvA and exits via RuvB. An RuvB hexamer assembles on each DNA strand where it exits the tetramer. Each RuvB hexamer is contacted by two RuvA subunits (via domain III) on 2 adjacent RuvB subunits; this complex drives branch migration. In the full resolvosome a probable DNA-RuvA(4)-RuvB(12)-RuvC(2) complex forms which resolves the HJ.

It is found in the cytoplasm. It catalyses the reaction ATP + H2O = ADP + phosphate + H(+). Its function is as follows. The RuvA-RuvB-RuvC complex processes Holliday junction (HJ) DNA during genetic recombination and DNA repair, while the RuvA-RuvB complex plays an important role in the rescue of blocked DNA replication forks via replication fork reversal (RFR). RuvA specifically binds to HJ cruciform DNA, conferring on it an open structure. The RuvB hexamer acts as an ATP-dependent pump, pulling dsDNA into and through the RuvAB complex. RuvB forms 2 homohexamers on either side of HJ DNA bound by 1 or 2 RuvA tetramers; 4 subunits per hexamer contact DNA at a time. Coordinated motions by a converter formed by DNA-disengaged RuvB subunits stimulates ATP hydrolysis and nucleotide exchange. Immobilization of the converter enables RuvB to convert the ATP-contained energy into a lever motion, pulling 2 nucleotides of DNA out of the RuvA tetramer per ATP hydrolyzed, thus driving DNA branch migration. The RuvB motors rotate together with the DNA substrate, which together with the progressing nucleotide cycle form the mechanistic basis for DNA recombination by continuous HJ branch migration. Branch migration allows RuvC to scan DNA until it finds its consensus sequence, where it cleaves and resolves cruciform DNA. The polypeptide is Holliday junction branch migration complex subunit RuvB (Rhodococcus erythropolis (strain PR4 / NBRC 100887)).